The primary structure comprises 645 residues: Sodium-dependent nutrient amino acid transporter 1 (645 aa).

The segment at 1-48 (MELKTMPHNGANGSPQHNNNNNSNNNNNVSSDTKTDNNEKEAQKKDEG) is disordered. At 1–51 (MELKTMPHNGANGSPQHNNNNNSNNNNNVSSDTKTDNNEKEAQKKDEGRTN) the chain is on the cytoplasmic side. The span at 18–32 (NNNNNSNNNNNVSSD) shows a compositional bias: low complexity. Basic and acidic residues predominate over residues 33–48 (TKTDNNEKEAQKKDEG). Transmembrane regions (helical) follow at residues 52-72 (WSNG…LGNV), 85-105 (GAFL…MYYL), and 138-158 (TICI…YLFV). 2 N-linked (GlcNAc...) asparagine glycosylation sites follow: N191 and N205. The next 7 helical transmembrane spans lie at 234 to 254 (IPDW…FLVI), 264 to 284 (AAYF…GRAV), 313 to 333 (AVVQ…MFAS), 347 to 367 (IVTT…FAIL), 407 to 427 (LFSV…IVAL), 454 to 474 (CGFL…LTLV), and 480 to 500 (TYVV…IYGL). N-linked (GlcNAc...) asparagine glycosylation is present at N514. 2 helical membrane passes run 522–542 (CWSF…MATI) and 559–579 (AGWL…WWYI).

The protein belongs to the sodium:neurotransmitter symporter (SNF) (TC 2.A.22) family.

The protein resides in the membrane. Its function is as follows. Unusual broad substrate spectrum amino acid:sodium cotransporter that promotes absorption of the D isomers of essential amino acids. Neutral amino acids are the preferred substrates, especially methionine and phenylalanine. This chain is Sodium-dependent nutrient amino acid transporter 1, found in Drosophila mojavensis (Fruit fly).